A 4516-amino-acid polypeptide reads, in one-letter code: Dynein axonemal heavy chain 1 (4516 aa).

The tract at residues 1 to 1748 is stem; it reads MVTLSISDTL…YIRAVNAEFI (1748 aa). Residues 78–160 form a disordered region; sequence SSGSDKSLKN…RKSPLAGTDK (83 aa). 2 stretches are compositionally biased toward basic and acidic residues: residues 83–97 and 113–129; these read KSLK…KEEA and ENHD…RNPE. AAA regions lie at residues 1749 to 1956, 2016 to 2249, 2422 to 2682, and 2780 to 2972; these read YGYE…VISA, QAIR…TTVK, TMMP…VFQG, and DYNQ…CCTI. The GPAGTGKT motif signature appears at 1787–1794; that stretch reads GPAGTGKT. 1787-1794 contacts ATP; that stretch reads GPAGTGKT. A CFDEFNR motif motif is present at residues 1837–1843; that stretch reads CFDEFNR. ATP contacts are provided by residues 2054–2061, 2460–2467, and 2819–2826; these read GPTGSGKS, GPTGTGKT, and GVGGSGRS. Positions 2987 to 3285 are stalk; the sequence is ATRFLHEIPE…MHKYHFVAKA (299 aa). Positions 3293–3394 form a coiled coil; sequence LREAQDDLEV…QDTVENLENM (102 aa). 2 AAA regions span residues 3388 to 3618 and 3831 to 4050; these read VENL…EERP and LPAF…SYNS.

Belongs to the dynein heavy chain family. As to quaternary structure, consists of at least two heavy chains and a number of intermediate and light chains. Expressed in brain.

Its subcellular location is the cytoplasm. The protein resides in the cytoskeleton. It is found in the cilium axoneme. The protein localises to the cell projection. It localises to the cilium. Its subcellular location is the flagellum. Its function is as follows. Force generating protein of cilia required for sperm flagellum motility. Produces force towards the minus ends of microtubules. Dynein has ATPase activity; the force-producing power stroke is thought to occur on release of ADP. Required in spermatozoa for the formation of the inner dynein arms and biogenesis of the axoneme. This chain is Dynein axonemal heavy chain 1, found in Rattus norvegicus (Rat).